A 179-amino-acid chain; its full sequence is Replication restart protein DnaT (179 aa).

Residues 156–179 (GGLPKRDVNTVSEPDSQIPPGFRG) form a disordered region.

Belongs to the DnaT family. In terms of assembly, homooligomerizes. Interacts with PriB. Component of the replication restart primosome. Primosome assembly occurs via a 'hand-off' mechanism. PriA binds to replication forks, subsequently PriB then DnaT bind; DnaT then displaces ssDNA to generate the helicase loading substrate.

Functionally, involved in the restart of stalled replication forks, which reloads the replicative helicase on sites other than the origin of replication. Can function in multiple replication restart pathways. Displaces ssDNA from a PriB-ssDNA complex. Probably forms a spiral filament on ssDNA. This Shigella dysenteriae serotype 1 (strain Sd197) protein is Replication restart protein DnaT.